A 162-amino-acid chain; its full sequence is Phosphopantetheine adenylyltransferase (162 aa).

Ser9 provides a ligand contact to substrate. ATP contacts are provided by residues 9-10 (SF) and His17. The substrate site is built by Lys41, Thr73, and Arg87. ATP is bound by residues 88–90 (GLR), Glu98, and 122–128 (NQNISSS).

Belongs to the bacterial CoaD family. As to quaternary structure, homohexamer. Requires Mg(2+) as cofactor.

It localises to the cytoplasm. The catalysed reaction is (R)-4'-phosphopantetheine + ATP + H(+) = 3'-dephospho-CoA + diphosphate. The protein operates within cofactor biosynthesis; coenzyme A biosynthesis; CoA from (R)-pantothenate: step 4/5. Reversibly transfers an adenylyl group from ATP to 4'-phosphopantetheine, yielding dephospho-CoA (dPCoA) and pyrophosphate. This Leuconostoc mesenteroides subsp. mesenteroides (strain ATCC 8293 / DSM 20343 / BCRC 11652 / CCM 1803 / JCM 6124 / NCDO 523 / NBRC 100496 / NCIMB 8023 / NCTC 12954 / NRRL B-1118 / 37Y) protein is Phosphopantetheine adenylyltransferase.